We begin with the raw amino-acid sequence, 388 residues long: Succinate--CoA ligase [ADP-forming] subunit beta (388 aa).

The ATP-grasp domain maps to 9–244 (KQLFARYGLP…QSQEDPREAQ (236 aa)). Residues lysine 46, 53–55 (GRG), glutamate 99, threonine 102, and glutamate 107 each bind ATP. Asparagine 199 and aspartate 213 together coordinate Mg(2+). Substrate-binding positions include asparagine 264 and 321–323 (GIV).

This sequence belongs to the succinate/malate CoA ligase beta subunit family. In terms of assembly, heterotetramer of two alpha and two beta subunits. Mg(2+) serves as cofactor.

The catalysed reaction is succinate + ATP + CoA = succinyl-CoA + ADP + phosphate. The enzyme catalyses GTP + succinate + CoA = succinyl-CoA + GDP + phosphate. The protein operates within carbohydrate metabolism; tricarboxylic acid cycle; succinate from succinyl-CoA (ligase route): step 1/1. Succinyl-CoA synthetase functions in the citric acid cycle (TCA), coupling the hydrolysis of succinyl-CoA to the synthesis of either ATP or GTP and thus represents the only step of substrate-level phosphorylation in the TCA. The beta subunit provides nucleotide specificity of the enzyme and binds the substrate succinate, while the binding sites for coenzyme A and phosphate are found in the alpha subunit. The protein is Succinate--CoA ligase [ADP-forming] subunit beta of Shigella dysenteriae serotype 1 (strain Sd197).